Consider the following 151-residue polypeptide: FAD synthase (151 aa).

ATP contacts are provided by residues 12 to 13, 17 to 20, Asp-97, and Tyr-125; these read TF and HPGH.

This sequence belongs to the archaeal FAD synthase family. Homodimer. It depends on a divalent metal cation as a cofactor.

The catalysed reaction is FMN + ATP + H(+) = FAD + diphosphate. The protein operates within cofactor biosynthesis; FAD biosynthesis; FAD from FMN: step 1/1. Its function is as follows. Catalyzes the transfer of the AMP portion of ATP to flavin mononucleotide (FMN) to produce flavin adenine dinucleotide (FAD) coenzyme. In Methanocaldococcus sp. (strain FS406-22), this protein is FAD synthase.